The primary structure comprises 476 residues: Glycogen synthase (476 aa).

Lys15 provides a ligand contact to ADP-alpha-D-glucose.

This sequence belongs to the glycosyltransferase 1 family. Bacterial/plant glycogen synthase subfamily.

The enzyme catalyses [(1-&gt;4)-alpha-D-glucosyl](n) + ADP-alpha-D-glucose = [(1-&gt;4)-alpha-D-glucosyl](n+1) + ADP + H(+). It functions in the pathway glycan biosynthesis; glycogen biosynthesis. In terms of biological role, synthesizes alpha-1,4-glucan chains using ADP-glucose. This Yersinia enterocolitica serotype O:8 / biotype 1B (strain NCTC 13174 / 8081) protein is Glycogen synthase.